The chain runs to 291 residues: 4-hydroxy-tetrahydrodipicolinate synthase (291 aa).

Threonine 44 contacts pyruvate. The active-site Proton donor/acceptor is tyrosine 132. Lysine 160 serves as the catalytic Schiff-base intermediate with substrate. Isoleucine 202 is a pyruvate binding site.

Belongs to the DapA family. As to quaternary structure, homotetramer; dimer of dimers.

It localises to the cytoplasm. It catalyses the reaction L-aspartate 4-semialdehyde + pyruvate = (2S,4S)-4-hydroxy-2,3,4,5-tetrahydrodipicolinate + H2O + H(+). It functions in the pathway amino-acid biosynthesis; L-lysine biosynthesis via DAP pathway; (S)-tetrahydrodipicolinate from L-aspartate: step 3/4. In terms of biological role, catalyzes the condensation of (S)-aspartate-beta-semialdehyde [(S)-ASA] and pyruvate to 4-hydroxy-tetrahydrodipicolinate (HTPA). In Syntrophus aciditrophicus (strain SB), this protein is 4-hydroxy-tetrahydrodipicolinate synthase.